Here is a 382-residue protein sequence, read N- to C-terminus: MGSTRIPLVKALHSPVSDYVNYDIIVRHYNYTGKLKISADKDNGIKLISVVFILICCFIILENIFVLLTIWKTKKFHRPMYYFIGNLALSDLLAGVAYTANLLLSGATTYKLTPAQWFLREGSMFVALSASVFSLLAIAIERYITMLKMKLHNGSNRFRSFLLISACWVISLILGGLPIMGWNCISTLPSCSTVLPLYHKHYILFCTTVFTLLLLSIVILYCRIYSLVRTRSRRLTFRKNISKASRSSEKSLALLKTVIIVLGVFIACWAPLFILLLLDVGCKVKTCDILFRTEYFLVLAVLNSGTNPIIYTLSNKEMRRAFVRIMSCCKCPSRDSASKFTRPIIAGMEFSRSKSDNSSHPQKDDGDNPETIMSSGNVNSSS.

Residues 1–46 lie on the Extracellular side of the membrane; sequence MGSTRIPLVKALHSPVSDYVNYDIIVRHYNYTGKLKISADKDNGIK. At Lys-10 the chain carries N6-acetyllysine. The N-linked (GlcNAc...) asparagine glycan is linked to Asn-30. The helical transmembrane segment at 47–68 threads the bilayer; the sequence is LISVVFILICCFIILENIFVLL. At 69 to 82 the chain is on the cytoplasmic side; the sequence is TIWKTKKFHRPMYY. Residues 83–104 form a helical membrane-spanning segment; the sequence is FIGNLALSDLLAGVAYTANLLL. The Extracellular portion of the chain corresponds to 105 to 116; it reads SGATTYKLTPAQ. A helical transmembrane segment spans residues 117-138; that stretch reads WFLREGSMFVALSASVFSLLAI. 120 to 121 serves as a coordination point for sphing-4-enine 1-phosphate; the sequence is RE. Residues 139-160 lie on the Cytoplasmic side of the membrane; that stretch reads AIERYITMLKMKLHNGSNRFRS. The helical transmembrane segment at 161-182 threads the bilayer; the sequence is FLLISACWVISLILGGLPIMGW. Residues 183 to 196 are Extracellular-facing; the sequence is NCISTLPSCSTVLP. Cys-184 and Cys-191 form a disulfide bridge. Residues 197 to 224 traverse the membrane as a helical segment; sequence LYHKHYILFCTTVFTLLLLSIVILYCRI. The Cytoplasmic segment spans residues 225–257; that stretch reads YSLVRTRSRRLTFRKNISKASRSSEKSLALLKT. Residue Thr-236 is modified to Phosphothreonine; by PKB/AKT1. A helical membrane pass occupies residues 258-278; it reads VIIVLGVFIACWAPLFILLLL. 265 to 269 lines the sphing-4-enine 1-phosphate pocket; the sequence is FIACW. The Extracellular portion of the chain corresponds to 279 to 289; the sequence is DVGCKVKTCDI. Cys-282 and Cys-287 are joined by a disulfide. Residues 290-310 form a helical membrane-spanning segment; the sequence is LFRTEYFLVLAVLNSGTNPII. Topologically, residues 311–382 are cytoplasmic; it reads YTLSNKEMRR…MSSGNVNSSS (72 aa). The S-palmitoyl cysteine moiety is linked to residue Cys-328. Residues 349 to 382 are disordered; sequence EFSRSKSDNSSHPQKDDGDNPETIMSSGNVNSSS. Phosphoserine is present on residues Ser-351 and Ser-353. The span at 351 to 366 shows a compositional bias: basic and acidic residues; it reads SRSKSDNSSHPQKDDG. Positions 371–382 are enriched in polar residues; sequence TIMSSGNVNSSS.

It belongs to the G-protein coupled receptor 1 family. Interacts with GNAI1 and GNAI3. Interacts with CD69; this interaction promotes S1PR1 degradation. S1P-induced endothelial cell migration requires the PKB/AKT1-mediated phosphorylation of the third intracellular loop at the Thr-236 residue. In terms of processing, palmitoylated by ZDHHC5. Palmitoylation is required for targeting to plasma membrane, enabling G(i) coupling.

The protein localises to the cell membrane. It localises to the endosome. The protein resides in the membrane raft. In terms of biological role, G-protein coupled receptor for the bioactive lysosphingolipid sphingosine 1-phosphate (S1P) that seems to be coupled to the G(i) subclass of heteromeric G proteins. Signaling leads to the activation of RAC1, SRC, PTK2/FAK1 and MAP kinases. Plays an important role in cell migration, probably via its role in the reorganization of the actin cytoskeleton and the formation of lamellipodia in response to stimuli that increase the activity of the sphingosine kinase SPHK1. Required for normal chemotaxis toward sphingosine 1-phosphate. Required for normal embryonic heart development and normal cardiac morphogenesis. Plays an important role in the regulation of sprouting angiogenesis and vascular maturation. Inhibits sprouting angiogenesis to prevent excessive sprouting during blood vessel development. Required for normal egress of mature T-cells from the thymus into the blood stream and into peripheral lymphoid organs. Plays a role in the migration of osteoclast precursor cells, the regulation of bone mineralization and bone homeostasis. Plays a role in responses to oxidized 1-palmitoyl-2-arachidonoyl-sn-glycero-3-phosphocholine by pulmonary endothelial cells and in the protection against ventilator-induced lung injury. This chain is Sphingosine 1-phosphate receptor 1 (S1PR1), found in Bos taurus (Bovine).